The sequence spans 509 residues: ATP synthase subunit alpha (509 aa).

169–176 (GDRQTGKT) lines the ATP pocket.

The protein belongs to the ATPase alpha/beta chains family. F-type ATPases have 2 components, CF(1) - the catalytic core - and CF(0) - the membrane proton channel. CF(1) has five subunits: alpha(3), beta(3), gamma(1), delta(1), epsilon(1). CF(0) has three main subunits: a(1), b(2) and c(9-12). The alpha and beta chains form an alternating ring which encloses part of the gamma chain. CF(1) is attached to CF(0) by a central stalk formed by the gamma and epsilon chains, while a peripheral stalk is formed by the delta and b chains.

It is found in the cell inner membrane. It carries out the reaction ATP + H2O + 4 H(+)(in) = ADP + phosphate + 5 H(+)(out). Produces ATP from ADP in the presence of a proton gradient across the membrane. The alpha chain is a regulatory subunit. This is ATP synthase subunit alpha from Brucella suis biovar 1 (strain 1330).